The sequence spans 495 residues: Phage-like element PBSX protein XkdE (495 aa).

This sequence belongs to the phage portal family. PBSX subfamily.

The protein is Phage-like element PBSX protein XkdE (xkdE) of Bacillus subtilis (strain 168).